Here is a 72-residue protein sequence, read N- to C-terminus: Large ribosomal subunit protein uL29 (72 aa).

Belongs to the universal ribosomal protein uL29 family.

This chain is Large ribosomal subunit protein uL29, found in Prochlorococcus marinus (strain MIT 9215).